The primary structure comprises 387 residues: O-methyltransferase fsr2 (387 aa).

Residue D231 coordinates S-adenosyl-L-methionine. H280 acts as the Proton acceptor in catalysis.

The protein belongs to the class I-like SAM-binding methyltransferase superfamily. Cation-independent O-methyltransferase family. COMT subfamily.

The protein operates within polyketide biosynthesis. Its function is as follows. O-methyltransferase; part of the gene cluster that mediates the biosynthesis of fusarubins, highly pigmented naphthoquinones responsible for the coloration of the fruiting bodies. The non-reducing polyketide synthase FSR1 is responsible for the condensation of seven acetyl-CoA units to yield a haptaketide. After rings A and B are formed by aldol-type cyclization, the PKS-derived product is released as 6-O-demethylfusarubinaldehyde. Then, two hydroxyl groups at C-5 and C-10 are incorporated by FSR3, and simultaneously hydroxyl groups at C-6 and C-8 are methylated by FSR2. The aldehyde is, on the one hand, reduced by FSR3 to 8-O-methylfusarubin alcohol, which equilibrates mainly with 8-O-methylfusarubin and only small amounts of 8-O-methylnectriafurone. On the other hand, the aldehyde can be oxidized to form 8-O-methylfusarubinic acid, a reaction driven by FSR3 equilibrating with 8-O-methylfusarubinlactone, finally resulting in 8-O-methylanhydrofusarubinlactol after a further reduction step and loss of water. 8-O-Methylfusarubinic acid can also undergo decarboxylation, resulting in 8-O-methyl-13-hydroxynorjavanicin after another hydroxylation step at C-13. Both steps are most likely also accomplished by FSR3. No enzymatic function has been determined so far for either FSR4 and FSR5. Their deletion does not alter the product spectrum, but the possibility that they catalyze specific enzymatic steps during perithecium development cannot be ruled out. FSR4 might possess a regulatory function in the biosynthesis of fusarubins. In Gibberella fujikuroi (strain CBS 195.34 / IMI 58289 / NRRL A-6831) (Bakanae and foot rot disease fungus), this protein is O-methyltransferase fsr2.